The primary structure comprises 334 residues: Mevalonate kinase (334 aa).

110 to 120 contacts ATP; the sequence is PVGAGLGSSAA. D161 functions as the Proton acceptor in the catalytic mechanism.

Belongs to the GHMP kinase family. Mevalonate kinase subfamily. In terms of assembly, homodimer. It depends on Mg(2+) as a cofactor.

It localises to the cytoplasm. It catalyses the reaction (R)-mevalonate + ATP = (R)-5-phosphomevalonate + ADP + H(+). The protein operates within isoprenoid biosynthesis; isopentenyl diphosphate biosynthesis via mevalonate pathway; isopentenyl diphosphate from (R)-mevalonate: step 1/3. Functionally, catalyzes the phosphorylation of (R)-mevalonate (MVA) to (R)-mevalonate 5-phosphate (MVAP). Functions in the mevalonate (MVA) pathway leading to isopentenyl diphosphate (IPP), a key precursor for the biosynthesis of isoprenoid compounds such as archaeal membrane lipids. This is Mevalonate kinase from Thermococcus gammatolerans (strain DSM 15229 / JCM 11827 / EJ3).